The primary structure comprises 24 residues: Brevinin-1PTa (24 aa).

Cysteine 18 and cysteine 24 are disulfide-bonded.

Expressed by the skin glands.

Its subcellular location is the secreted. Functionally, has antibacterial activity against the Gram-positive bacterium S.aureus ATCC 25923 (MIC=3 uM) and the Gram-negative bacterium E.coli ATCC 25726 (MIC=24 uM). The sequence is that of Brevinin-1PTa from Pulchrana picturata (Malaysian fire frog).